Consider the following 472-residue polypeptide: Methanethiol oxidase (472 aa).

An N-acetylalanine modification is found at alanine 2. A phosphoserine mark is found at serine 111, serine 371, and serine 467.

This sequence belongs to the selenium-binding protein family. As to quaternary structure, interacts with USP33. Phosphorylated. Post-translationally, the N-terminus is blocked. As to expression, widely expressed. Highly expressed in liver, lung, colon, prostate, kidney and pancreas. In brain, present both in neurons and glia (at protein level). Down-regulated in lung adenocarcinoma, colorectal carcinoma and ovarian cancer. Two-fold up-regulated in brain and blood from schizophrenia patients.

It localises to the nucleus. The protein resides in the cytoplasm. Its subcellular location is the cytosol. The protein localises to the membrane. It carries out the reaction methanethiol + O2 + H2O = hydrogen sulfide + formaldehyde + H2O2 + H(+). It functions in the pathway organosulfur degradation. Catalyzes the oxidation of methanethiol, an organosulfur compound known to be produced in substantial amounts by gut bacteria. Selenium-binding protein which may be involved in the sensing of reactive xenobiotics in the cytoplasm. May be involved in intra-Golgi protein transport. The polypeptide is Methanethiol oxidase (SELENBP1) (Homo sapiens (Human)).